The following is a 142-amino-acid chain: Ribosomal RNA large subunit methyltransferase H (142 aa).

Residues leucine 55 and glycine 87 each coordinate S-adenosyl-L-methionine.

Belongs to the RNA methyltransferase RlmH family. In terms of assembly, homodimer.

The protein localises to the cytoplasm. The catalysed reaction is pseudouridine(1915) in 23S rRNA + S-adenosyl-L-methionine = N(3)-methylpseudouridine(1915) in 23S rRNA + S-adenosyl-L-homocysteine + H(+). Specifically methylates the pseudouridine at position 1915 (m3Psi1915) in 23S rRNA. The chain is Ribosomal RNA large subunit methyltransferase H from Sphingopyxis alaskensis (strain DSM 13593 / LMG 18877 / RB2256) (Sphingomonas alaskensis).